The primary structure comprises 489 residues: Glucose-6-phosphate 1-dehydrogenase (489 aa).

Arg50 and Lys151 together coordinate NADP(+). Positions 181, 185, 219, and 238 each coordinate substrate. The Proton acceptor role is filled by His243. Positions 341 and 346 each coordinate substrate.

Belongs to the glucose-6-phosphate dehydrogenase family. As to quaternary structure, homodimer.

It catalyses the reaction D-glucose 6-phosphate + NADP(+) = 6-phospho-D-glucono-1,5-lactone + NADPH + H(+). It functions in the pathway carbohydrate degradation; pentose phosphate pathway; D-ribulose 5-phosphate from D-glucose 6-phosphate (oxidative stage): step 1/3. Functionally, catalyzes the oxidation of glucose 6-phosphate to 6-phosphogluconolactone. This chain is Glucose-6-phosphate 1-dehydrogenase, found in Gluconobacter oxydans (strain 621H) (Gluconobacter suboxydans).